The chain runs to 316 residues: Nautilin-63 (316 aa).

Disordered stretches follow at residues 1–26 (IPDL…GPRG), 149–173 (PFPT…VTPF), 189–238 (DSRC…GIAS), and 259–278 (PPTS…GLNK). The segment covering 10–26 (TLPVLTKGPTGLLGPRG) has biased composition (low complexity). Composition is skewed to polar residues over residues 152 to 163 (TSRSTYGPSGSQ), 207 to 216 (GHSSPATLNS), and 269 to 278 (SGYTSDGLNK).

Post-translationally, glycosylated; contains mainly glucose, galactose, galactosamine, glucosamine and glucuronic acid. Component of the acid-soluble organic matrix of nacreous shell layers (at protein level).

It localises to the secreted. In terms of biological role, involved in nacre formation. Affects morphology of calcite crystals in vitro but does not inhibit their formation. Binds chitin. The polypeptide is Nautilin-63 (Nautilus macromphalus (Bellybutton nautilus)).